The following is an 849-amino-acid chain: Aminopeptidase N (849 aa).

Residues E122 and 259–263 (GAMEN) contribute to the substrate site. H294 contributes to the Zn(2+) binding site. The Proton acceptor role is filled by E295. Positions 298 and 317 each coordinate Zn(2+).

Belongs to the peptidase M1 family. In terms of assembly, monomer. Zn(2+) is required as a cofactor.

It is found in the cytoplasm. The catalysed reaction is Release of an N-terminal amino acid, Xaa-|-Yaa- from a peptide, amide or arylamide. Xaa is preferably Ala, but may be most amino acids including Pro (slow action). When a terminal hydrophobic residue is followed by a prolyl residue, the two may be released as an intact Xaa-Pro dipeptide.. Its function is as follows. Aminopeptidase with broad substrate specificity to several peptides. It has more affinity for oligopeptides than for dipeptides. It plays an essential role in the metabolism, it may be involved in nitrogen supply or protein turnover. This chain is Aminopeptidase N (pepN), found in Lactococcus lactis subsp. lactis (Streptococcus lactis).